Reading from the N-terminus, the 475-residue chain is Cytochrome P450 monooxygenase opdE (475 aa).

Residues 10–32 (VQNIPVLLLSCGFLAILFRSLVL) form a helical membrane-spanning segment. C457 lines the heme pocket.

Belongs to the cytochrome P450 family. Heme serves as cofactor.

The protein localises to the membrane. Its pathway is secondary metabolite biosynthesis. In terms of biological role, cytochrome P450 monooxygenase; part of the gene cluster that mediates the biosynthesis of oxopyrrolidines, polyketide-amino acid hybrid compounds with feature structures of tetramic acid. Does not seem to play a role in oxopyrrolidines A and B biosynthesis. May be involved in further modifications of these oxopyrrolidines. This Penicillium oxalicum (strain 114-2 / CGMCC 5302) (Penicillium decumbens) protein is Cytochrome P450 monooxygenase opdE.